The chain runs to 320 residues: Mitochondrial thiamine pyrophosphate carrier (320 aa).

3 Solcar repeats span residues 13-106 (NTKF…LTEL), 116-202 (REFS…LKHL), and 214-309 (NENL…FCNV). Residues 19–39 (AVAGSVSGLVTRALISPFDVI) form a helical membrane-spanning segment. S51 is modified (phosphoserine). 4 helical membrane passes run 87-107 (ILSI…TELV), 122-142 (FVCG…VDVL), 173-193 (VFYK…GLQF), and 220-240 (LLCG…LDLF). A Substrate recognition motif is present at residues 241–246 (KKRLQV). A helical membrane pass occupies residues 293-313 (ALSTGFMFFSYEFFCNVFHCM).

This sequence belongs to the mitochondrial carrier (TC 2.A.29) family. As to expression, expressed in all tissues examined except for placenta. Highest levels in colon, kidney, lung, testis, spleen, and brain.

Its subcellular location is the mitochondrion membrane. The catalysed reaction is thiamine phosphate(out) + thiamine diphosphate(in) = thiamine phosphate(in) + thiamine diphosphate(out). Mitochondrial transporter mediating uptake of thiamine diphosphate into mitochondria. It is not clear if the antiporter activity is affected by the membrane potential or by the proton electrochemical gradient. The polypeptide is Mitochondrial thiamine pyrophosphate carrier (Homo sapiens (Human)).